Here is a 374-residue protein sequence, read N- to C-terminus: Probable dual-specificity RNA methyltransferase RlmN 3 (374 aa).

Residue Glu96 is the Proton acceptor of the active site. Residues 110–350 enclose the Radical SAM core domain; it reads DHSRKTICIS…VTLRREKGHD (241 aa). Cys117 and Cys355 are oxidised to a cystine. [4Fe-4S] cluster contacts are provided by Cys124, Cys128, and Cys131. Residues 181-182, Ser213, 236-238, and Asn312 contribute to the S-adenosyl-L-methionine site; these read GE and SLH. Cys355 acts as the S-methylcysteine intermediate in catalysis.

The protein belongs to the radical SAM superfamily. RlmN family. It depends on [4Fe-4S] cluster as a cofactor.

It localises to the cytoplasm. The catalysed reaction is adenosine(2503) in 23S rRNA + 2 reduced [2Fe-2S]-[ferredoxin] + 2 S-adenosyl-L-methionine = 2-methyladenosine(2503) in 23S rRNA + 5'-deoxyadenosine + L-methionine + 2 oxidized [2Fe-2S]-[ferredoxin] + S-adenosyl-L-homocysteine. The enzyme catalyses adenosine(37) in tRNA + 2 reduced [2Fe-2S]-[ferredoxin] + 2 S-adenosyl-L-methionine = 2-methyladenosine(37) in tRNA + 5'-deoxyadenosine + L-methionine + 2 oxidized [2Fe-2S]-[ferredoxin] + S-adenosyl-L-homocysteine. In terms of biological role, specifically methylates position 2 of adenine 2503 in 23S rRNA and position 2 of adenine 37 in tRNAs. The polypeptide is Probable dual-specificity RNA methyltransferase RlmN 3 (Opitutus terrae (strain DSM 11246 / JCM 15787 / PB90-1)).